The chain runs to 354 residues: MSTSFPELDLENFEYDDSAEACYLGDIVAFGTIFLSVFYALVFTFGLVGNLLVVLALTNSRKPKSITDIYLLNLALSDLLFVATLPFWTHYLISHEGLHNAMCKLTTAFFFIGFFGGIFFITVISIDRYLAIVLAANSMNNRTVQHGVTISLGVWAAAILVASPQFMFTKRKDNECLGDYPEVLQEMWPVLRNSEVNILGFALPLLIMSFCYFRIIQTLFSCKNRKKARAVRLILLVVFAFFLFWTPYNIMIFLETLKFYNFFPSCDMKRDLRLALSVTETVAFSHCCLNPFIYAFAGEKFRRYLGHLYRKCLAVLCGHPVHTGFSPESQRSRQDSILSSFTHYTSEGDGSLLL.

Residues 1-32 (MSTSFPELDLENFEYDDSAEACYLGDIVAFGT) lie on the Extracellular side of the membrane. Residues 33–60 (IFLSVFYALVFTFGLVGNLLVVLALTNS) traverse the membrane as a helical segment. Residues 61 to 70 (RKPKSITDIY) are Cytoplasmic-facing. Residues 71 to 91 (LLNLALSDLLFVATLPFWTHY) form a helical membrane-spanning segment. Over 92–104 (LISHEGLHNAMCK) the chain is Extracellular. An intrachain disulfide couples cysteine 103 to cysteine 176. A helical transmembrane segment spans residues 105–126 (LTTAFFFIGFFGGIFFITVISI). Topologically, residues 127–143 (DRYLAIVLAANSMNNRT) are cytoplasmic. The helical transmembrane segment at 144-168 (VQHGVTISLGVWAAAILVASPQFMF) threads the bilayer. Over 169–196 (TKRKDNECLGDYPEVLQEMWPVLRNSEV) the chain is Extracellular. The chain crosses the membrane as a helical span at residues 197–216 (NILGFALPLLIMSFCYFRII). The Cytoplasmic segment spans residues 217 to 232 (QTLFSCKNRKKARAVR). A helical transmembrane segment spans residues 233–257 (LILLVVFAFFLFWTPYNIMIFLETL). Over 258–274 (KFYNFFPSCDMKRDLRL) the chain is Extracellular. The chain crosses the membrane as a helical span at residues 275-298 (ALSVTETVAFSHCCLNPFIYAFAG). The Cytoplasmic portion of the chain corresponds to 299-354 (EKFRRYLGHLYRKCLAVLCGHPVHTGFSPESQRSRQDSILSSFTHYTSEGDGSLLL). Threonine 345 bears the Phosphothreonine mark.

It belongs to the G-protein coupled receptor 1 family. In terms of assembly, found in a ternary complex with CX3CL1 and ITGAV:ITGB3 or ITGA4:ITGB1. In terms of processing, this protein is not N-glycosylated which is unusual for G-protein-coupled receptors. As to expression, specifically expressed in subsets of leukocytes: expressed in monocytes, subsets of T-cells and natural killer (NK) cells in the circulation, dendritic cells, as well as in microglia in the central nervous system (CNS). Expression level subdivides blood monocytes into two major functional subsets; CD14(+)CD16(-)-CX3CR1(low) inflammatory monocytes and CD14(low)CD16(+)CX3CR1(high) homeostatic monocytes. Expressed in myeloid-derived mucosal dendritic cells, which populate the entire lamina propria of the small intestine.

It localises to the cell membrane. In terms of biological role, receptor for the C-X3-C chemokine fractalkine (CX3CL1) present on many early leukocyte cells; CX3CR1-CX3CL1 signaling exerts distinct functions in different tissue compartments, such as immune response, inflammation, cell adhesion and chemotaxis. CX3CR1-CX3CL1 signaling mediates cell migratory functions. Responsible for the recruitment of natural killer (NK) cells to inflamed tissues. Acts as a regulator of inflammation process leading to atherogenesis by mediating macrophage and monocyte recruitment to inflamed atherosclerotic plaques, promoting cell survival. Involved in airway inflammation by promoting interleukin 2-producing T helper (Th2) cell survival in inflamed lung. Involved in the migration of circulating monocytes to non-inflamed tissues, where they differentiate into macrophages and dendritic cells. Acts as a negative regulator of angiogenesis, probably by promoting macrophage chemotaxis. Plays a key role in brain microglia by regulating inflammatory response in the central nervous system (CNS) and regulating synapse maturation. Required to restrain the microglial inflammatory response in the CNS and the resulting parenchymal damage in response to pathological stimuli. Involved in brain development by participating in synaptic pruning, a natural process during which brain microglia eliminates extra synapses during postnatal development. Synaptic pruning by microglia is required to promote the maturation of circuit connectivity during brain development. Acts as an important regulator of the gut microbiota by controlling immunity to intestinal bacteria and fungi. Expressed in lamina propria dendritic cells in the small intestine, which form transepithelial dendrites capable of taking up bacteria in order to provide defense against pathogenic bacteria. Required to initiate innate and adaptive immune responses against dissemination of commensal fungi (mycobiota) component of the gut: expressed in mononuclear phagocytes (MNPs) and acts by promoting induction of antifungal IgG antibodies response to confer protection against disseminated C.albicans or C.auris infection. Also acts as a receptor for C-C motif chemokine CCL26, inducing cell chemotaxis. The protein is CX3C chemokine receptor 1 of Mus musculus (Mouse).